A 171-amino-acid polypeptide reads, in one-letter code: MNKANSFNKEELIACGHGNLFGPNSPRLPVDNMLMIDRIITINDNGGEFGKGEIVAELDINPDLWFFGCHFISDPVMPGCLGLDAMWQLVGFYLGWEGAEGKGRALGVGEVKFTGQVLPGAKKVTYKLNIKRTIHRKLVMGIADAILEVDGRQIYSATDLKVGVFSDTSTF.

H70 is a catalytic residue.

It belongs to the thioester dehydratase family. FabA subfamily. Homodimer.

It localises to the cytoplasm. The enzyme catalyses a (3R)-hydroxyacyl-[ACP] = a (2E)-enoyl-[ACP] + H2O. It catalyses the reaction (3R)-hydroxydecanoyl-[ACP] = (2E)-decenoyl-[ACP] + H2O. The catalysed reaction is (2E)-decenoyl-[ACP] = (3Z)-decenoyl-[ACP]. Its pathway is lipid metabolism; fatty acid biosynthesis. Functionally, necessary for the introduction of cis unsaturation into fatty acids. Catalyzes the dehydration of (3R)-3-hydroxydecanoyl-ACP to E-(2)-decenoyl-ACP and then its isomerization to Z-(3)-decenoyl-ACP. Can catalyze the dehydratase reaction for beta-hydroxyacyl-ACPs with saturated chain lengths up to 16:0, being most active on intermediate chain length. This chain is 3-hydroxydecanoyl-[acyl-carrier-protein] dehydratase, found in Shewanella sp. (strain ANA-3).